The primary structure comprises 173 residues: Small ribosomal subunit protein uS9 (173 aa).

The segment covering 1–15 (MTDTPTENLENTEVT) has biased composition (polar residues). Disordered regions lie at residues 1 to 26 (MTDT…EIAY) and 135 to 173 (EASR…YSKR). Basic residues predominate over residues 154-173 (KERKKAGLKKARKAPQYSKR).

The protein belongs to the universal ribosomal protein uS9 family.

This is Small ribosomal subunit protein uS9 from Cutibacterium acnes (strain DSM 16379 / KPA171202) (Propionibacterium acnes).